The sequence spans 345 residues: Very-long-chain 3-oxoacyl-CoA reductase (345 aa).

A helical transmembrane segment spans residues 26–46 (GAAVLLATGGLFLASRVLTFV). Positions 71, 125, 133, 152, 219, 223, 252, and 254 each coordinate NADP(+). The active-site Proton donor is Tyr219. Lys223 acts as the Lowers pKa of active site Tyr in catalysis.

It belongs to the short-chain dehydrogenases/reductases (SDR) family.

It localises to the endoplasmic reticulum membrane. It carries out the reaction a very-long-chain (3R)-3-hydroxyacyl-CoA + NADP(+) = a very-long-chain 3-oxoacyl-CoA + NADPH + H(+). It functions in the pathway lipid metabolism; fatty acid biosynthesis. Functionally, component of the microsomal membrane bound fatty acid elongation system, which produces the 26-carbon very long-chain fatty acids (VLCFA) from palmitate. Catalyzes the reduction of the 3-ketoacyl-CoA intermediate that is formed in each cycle of fatty acid elongation. VLCFAs serve as precursors for ceramide and sphingolipids. This is Very-long-chain 3-oxoacyl-CoA reductase from Aspergillus clavatus (strain ATCC 1007 / CBS 513.65 / DSM 816 / NCTC 3887 / NRRL 1 / QM 1276 / 107).